We begin with the raw amino-acid sequence, 275 residues long: Two-component response regulator PprB (275 aa).

The region spanning 10–128 (SVLIIDDEPQ…ELLHGLERLE (119 aa)) is the Response regulatory domain. Position 60 is a 4-aspartylphosphate (aspartate 60). A disordered region spans residues 173–205 (SQPSALRSEDSQPSAPPAPVAESQVSPSNPLFG). Positions 200–265 (SNPLFGKLSP…QLALALSPAA (66 aa)) constitute an HTH luxR-type domain. A DNA-binding region (H-T-H motif) is located at residues 224 to 243 (NYQIAYELGITENTVKLYVS).

Phosphorylated by PprA.

Its function is as follows. Member of the two-component regulatory system PprA/PprB involved in biofilm formation by controlling the expression of many related genes including type IVb pili major subunit flp pilin, adhesin bapA or cupE fimbriae. Functions as a transcription regulator by direct binding to promoter regions. Negatively regulates its own transcription. The chain is Two-component response regulator PprB from Pseudomonas aeruginosa (strain ATCC 15692 / DSM 22644 / CIP 104116 / JCM 14847 / LMG 12228 / 1C / PRS 101 / PAO1).